Reading from the N-terminus, the 262-residue chain is uncharacterized protein (262 aa).

This sequence belongs to the AB hydrolase superfamily. AB hydrolase 2 family.

This is an uncharacterized protein from Mycosarcoma maydis (Corn smut fungus).